The chain runs to 168 residues: 2-C-methyl-D-erythritol 2,4-cyclodiphosphate synthase (168 aa).

The a divalent metal cation site is built by D13 and H15. 4-CDP-2-C-methyl-D-erythritol 2-phosphate contacts are provided by residues 13–15 (DVH) and 39–40 (HS). H47 is an a divalent metal cation binding site. 4-CDP-2-C-methyl-D-erythritol 2-phosphate is bound by residues 61 to 63 (DIG), 66 to 70 (FPDTD), F144, and R147.

Belongs to the IspF family. Homotrimer. A divalent metal cation serves as cofactor.

It carries out the reaction 4-CDP-2-C-methyl-D-erythritol 2-phosphate = 2-C-methyl-D-erythritol 2,4-cyclic diphosphate + CMP. It functions in the pathway isoprenoid biosynthesis; isopentenyl diphosphate biosynthesis via DXP pathway; isopentenyl diphosphate from 1-deoxy-D-xylulose 5-phosphate: step 4/6. In terms of biological role, involved in the biosynthesis of isopentenyl diphosphate (IPP) and dimethylallyl diphosphate (DMAPP), two major building blocks of isoprenoid compounds. Catalyzes the conversion of 4-diphosphocytidyl-2-C-methyl-D-erythritol 2-phosphate (CDP-ME2P) to 2-C-methyl-D-erythritol 2,4-cyclodiphosphate (ME-CPP) with a corresponding release of cytidine 5-monophosphate (CMP). In Ralstonia nicotianae (strain ATCC BAA-1114 / GMI1000) (Ralstonia solanacearum), this protein is 2-C-methyl-D-erythritol 2,4-cyclodiphosphate synthase.